Reading from the N-terminus, the 341-residue chain is UPF0284 protein Ta0078 (341 aa).

It belongs to the UPF0284 family.

The protein is UPF0284 protein Ta0078 of Thermoplasma acidophilum (strain ATCC 25905 / DSM 1728 / JCM 9062 / NBRC 15155 / AMRC-C165).